Reading from the N-terminus, the 186-residue chain is Ribosome-recycling factor (186 aa).

It belongs to the RRF family.

The protein resides in the cytoplasm. Responsible for the release of ribosomes from messenger RNA at the termination of protein biosynthesis. May increase the efficiency of translation by recycling ribosomes from one round of translation to another. This is Ribosome-recycling factor from Chlorobium luteolum (strain DSM 273 / BCRC 81028 / 2530) (Pelodictyon luteolum).